The primary structure comprises 205 residues: N-(5'-phosphoribosyl)anthranilate isomerase (205 aa).

It belongs to the TrpF family.

The catalysed reaction is N-(5-phospho-beta-D-ribosyl)anthranilate = 1-(2-carboxyphenylamino)-1-deoxy-D-ribulose 5-phosphate. It functions in the pathway amino-acid biosynthesis; L-tryptophan biosynthesis; L-tryptophan from chorismate: step 3/5. This chain is N-(5'-phosphoribosyl)anthranilate isomerase, found in Acidithiobacillus ferrooxidans (strain ATCC 23270 / DSM 14882 / CIP 104768 / NCIMB 8455) (Ferrobacillus ferrooxidans (strain ATCC 23270)).